We begin with the raw amino-acid sequence, 506 residues long: Histidine ammonia-lyase (506 aa).

Residues 143–145 (ASG) constitute a cross-link (5-imidazolinone (Ala-Gly)). Residue Ser144 is modified to 2,3-didehydroalanine (Ser).

Belongs to the PAL/histidase family. Post-translationally, contains an active site 4-methylidene-imidazol-5-one (MIO), which is formed autocatalytically by cyclization and dehydration of residues Ala-Ser-Gly.

Its subcellular location is the cytoplasm. The catalysed reaction is L-histidine = trans-urocanate + NH4(+). It participates in amino-acid degradation; L-histidine degradation into L-glutamate; N-formimidoyl-L-glutamate from L-histidine: step 1/3. The chain is Histidine ammonia-lyase from Enterobacter sp. (strain 638).